A 63-amino-acid polypeptide reads, in one-letter code: Putative transmembrane protein ORF63 (63 aa).

Residues 1–8 (MQSGNFTL) lie on the Extracellular side of the membrane. A helical transmembrane segment spans residues 9–29 (EVIMYLINSILAFIMIFFTFV). Residues 30–31 (NP) are Cytoplasmic-facing. Residues 32–52 (SLLKCQYWTYILVALITAIIF) traverse the membrane as a helical segment. Residues 53–63 (HTGSKVGKSSG) lie on the Extracellular side of the membrane.

Its subcellular location is the host membrane. This chain is Putative transmembrane protein ORF63, found in Acidianus filamentous virus 1 (isolate United States/Yellowstone) (AFV-1).